The following is an 874-amino-acid chain: Collagen alpha-2(I) chain (874 aa).

The interval serine 1 to alanine 874 is disordered. 4-hydroxyproline occurs at positions 10 and 13. An Allysine modification is found at lysine 16. The segment covering leucine 27 to proline 66 has biased composition (low complexity). Proline 34 and proline 40 each carry 4-hydroxyproline. Position 93 is a 5-hydroxylysine; alternate (lysine 93). O-linked (Gal...) hydroxylysine; alternate glycosylation occurs at lysine 93. Low complexity-rich tracts occupy residues alanine 110–proline 143, proline 188–proline 209, and proline 218–lysine 236. The span at glycine 237 to glycine 246 shows a compositional bias: gly residues. The span at serine 247–serine 257 shows a compositional bias: low complexity. Residues proline 317 and proline 320 each carry the 4-hydroxyproline modification. 3 stretches are compositionally biased toward low complexity: residues leucine 346–alanine 365, proline 434–proline 451, and glutamate 463–alanine 473. The span at glycine 474–glycine 483 shows a compositional bias: gly residues. 2 stretches are compositionally biased toward low complexity: residues arginine 491–serine 538 and valine 545–alanine 565. A compositionally biased stretch (basic and acidic residues) spans lysine 566–lysine 575. Low complexity predominate over residues proline 583–alanine 593. Gly residues predominate over residues glycine 603–glycine 612. The segment covering threonine 614–threonine 623 has biased composition (low complexity). Gly residues predominate over residues glycine 648–glycine 662. 2 stretches are compositionally biased toward low complexity: residues phenylalanine 663 to proline 697 and leucine 705 to proline 724. Over residues glycine 725–glycine 744 the composition is skewed to gly residues. Composition is skewed to low complexity over residues alanine 745–alanine 755 and glutamate 763–proline 778.

The protein belongs to the fibrillar collagen family. As to quaternary structure, trimers of one alpha 2(I) and two alpha 1(I) chains. Interacts (via C-terminus) with TMEM131 (via PapD-L domain); the interaction is direct and is involved in assembly and TRAPPIII ER-to-Golgi transport complex-dependent secretion of collagen. Prolines at the third position of the tripeptide repeating unit (G-X-Y) are hydroxylated in some or all of the chains. As to expression, expressed in bones.

It localises to the secreted. The protein localises to the extracellular space. It is found in the extracellular matrix. Type I collagen is a member of group I collagen (fibrillar forming collagen). The polypeptide is Collagen alpha-2(I) chain (Megalonyx jeffersonii (Jefferson's ground sloth)).